The sequence spans 319 residues: Olfactory receptor 13F1 (319 aa).

At 1–25 (MFPANWTSVKVFFFLGFFHYPKVQV) the chain is on the extracellular side. A glycan (N-linked (GlcNAc...) asparagine) is linked at Asn5. The helical transmembrane segment at 26-46 (IIFAVCLLMYLITLLGNIFLI) threads the bilayer. Residues 47–54 (SITILDSH) are Cytoplasmic-facing. Residues 55–75 (LHTPMYLFLSNLSFLDIWYSS) traverse the membrane as a helical segment. Over 76–99 (SALSPMLANFVSGRNTISFSGCAT) the chain is Extracellular. The cysteines at positions 97 and 189 are disulfide-linked. Residues 100–120 (QMYLSLAMGSTECVLLPMMAY) traverse the membrane as a helical segment. Residues 121-139 (DRYVAICNPLRYPVIMNRR) are Cytoplasmic-facing. Residues 140-160 (TCVQIAAGSWMTGCLTAMVEM) form a helical membrane-spanning segment. The Extracellular portion of the chain corresponds to 161 to 197 (MSVLPLSLCGNSIINHFTCEILAILKLVCVDTSLVQL). A helical transmembrane segment spans residues 198–217 (IMLVISVLLLPMPMLLICIS). The Cytoplasmic segment spans residues 218–237 (YAFILASILRISSVEGRSKA). The helical transmembrane segment at 238 to 258 (FSTCTAHLMVVVLFYGTALSM) threads the bilayer. At 259–271 (HLKPSAVDSQEID) the chain is on the extracellular side. A helical transmembrane segment spans residues 272 to 292 (KFMALVYAGQTPMLNPIIYSL). Over 293 to 319 (RNKEVKVALKKLLIRNHFNTAFISILK) the chain is Cytoplasmic.

This sequence belongs to the G-protein coupled receptor 1 family.

It localises to the cell membrane. In terms of biological role, odorant receptor. In Homo sapiens (Human), this protein is Olfactory receptor 13F1 (OR13F1).